Here is a 409-residue protein sequence, read N- to C-terminus: tRNA-specific 2-thiouridylase MnmA (409 aa).

ATP-binding positions include 40-47 and Leu66; that span reads GLSGGVDS. The active-site Nucleophile is Cys127. A disulfide bridge connects residues Cys127 and Cys237. Residue Gly152 coordinates ATP. Residues 187 to 189 form an interaction with tRNA region; sequence KDQ. The Cysteine persulfide intermediate role is filled by Cys237. An interaction with tRNA region spans residues 342 to 343; that stretch reads RY.

This sequence belongs to the MnmA/TRMU family.

The protein resides in the cytoplasm. It carries out the reaction S-sulfanyl-L-cysteinyl-[protein] + uridine(34) in tRNA + AH2 + ATP = 2-thiouridine(34) in tRNA + L-cysteinyl-[protein] + A + AMP + diphosphate + H(+). In terms of biological role, catalyzes the 2-thiolation of uridine at the wobble position (U34) of tRNA, leading to the formation of s(2)U34. This chain is tRNA-specific 2-thiouridylase MnmA, found in Prochlorococcus marinus (strain MIT 9313).